The sequence spans 396 residues: Aspartate aminotransferase (396 aa).

Residues Gly34, Trp130, and Asn183 each contribute to the L-aspartate site. Residue Lys246 is modified to N6-(pyridoxal phosphate)lysine. L-aspartate is bound at residue Arg374.

This sequence belongs to the class-I pyridoxal-phosphate-dependent aminotransferase family. Homodimer. The cofactor is pyridoxal 5'-phosphate.

The protein localises to the cytoplasm. It catalyses the reaction L-aspartate + 2-oxoglutarate = oxaloacetate + L-glutamate. The polypeptide is Aspartate aminotransferase (aspC) (Salmonella typhi).